Consider the following 546-residue polypeptide: Thermolysin (546 aa).

Residues 1–25 (MDKRAMLGAIGLAFGLMAWPFGASA) form the signal peptide. Positions 26 to 228 (KEKSMVWNEQ…EAKPGGGQPV (203 aa)) are cleaved as a propeptide — activation peptide. Ca(2+)-binding residues include Asp287, Asp289, Gln291, and Asp368. His372 is a binding site for Zn(2+). The active site involves Glu373. 2 residues coordinate Zn(2+): His376 and Glu396. Residues Asn413, Asp415, Glu417, Glu420, Tyr423, Thr424, Ile427, and Asp430 each coordinate Ca(2+). The active-site Proton donor is His461.

Belongs to the peptidase M4 family. Ca(2+) serves as cofactor. Requires Zn(2+) as cofactor.

Its subcellular location is the secreted. It catalyses the reaction Preferential cleavage: Xaa-|-Leu &gt; Xaa-|-Phe.. Extracellular zinc metalloprotease. The polypeptide is Thermolysin (npr) (Bacillus caldolyticus).